The sequence spans 108 residues: Small proline-rich protein 2H (108 aa).

Positions 1-11 (MSYQQQQCKQP) are enriched in low complexity. Positions 1–22 (MSYQQQQCKQPCQPPPVCPPPQ) are disordered. Residues 12 to 22 (CQPPPVCPPPQ) are compositionally biased toward pro residues. A run of 7 repeats spans residues 21-29 (PQCPEPCPP), 30-38 (PKCPEPCPP), 39-47 (PKCTEPCPP), 48-56 (PKCPEPCPP), 57-65 (PKCPEPCPP), 66-74 (PKCPEPCPP), and 75-83 (PKCTEPCPP). The tract at residues 21 to 83 (PQCPEPCPPP…PPKCTEPCPP (63 aa)) is 7 X 9 AA tandem repeats of P-[KQ]-C-[PT]-E-P-C-P-P. The interval 83 to 108 (PPSYQQKCPSVQPSPPCQQKCPPKNK) is disordered. The segment covering 87–108 (QQKCPSVQPSPPCQQKCPPKNK) has biased composition (low complexity).

The protein belongs to the cornifin (SPRR) family. In terms of tissue distribution, expressed weakly in uterus.

It localises to the cytoplasm. Cross-linked envelope protein of keratinocytes. It is a keratinocyte protein that first appears in the cell cytosol, but ultimately becomes cross-linked to membrane proteins by transglutaminase. All that results in the formation of an insoluble envelope beneath the plasma membrane. The chain is Small proline-rich protein 2H (Sprr2h) from Mus musculus (Mouse).